The primary structure comprises 400 residues: Large envelope protein (400 aa).

An N-acetylmethionine modification is found at methionine 1. Positions 1-20 (MGGWSAKPRKGMGTNLSVPN) are disordered. A lipid anchor (N-myristoyl glycine; by host) is attached at glycine 2. Positions 2-119 (GGWSAKPRKG…PPLRDSHPQA (118 aa)) are pre-S1. Positions 2 to 174 (GGWSAKPRKG…SSRTGDPALN (173 aa)) are pre-S. Residues 2–181 (GGWSAKPRKG…ALNMENITSG (180 aa)) are Virion surface; in external conformation-facing. The Intravirion; in internal conformation portion of the chain corresponds to 2-253 (GGWSAKPRKG…PGYRWMCLRR (252 aa)). N-linked (GlcNAc...) asparagine glycosylation occurs at tryptophan 4. Positions 120–174 (MQWNSTAFQQALQDPRVRGLFFPAGGSSSGTVNPAPNIASHISSISSRTGDPALN) are pre-S2. Residues 182–202 (FLGPLLVLQAGFFLLTRILTI) traverse the membrane as a helical segment. The Intravirion; in external conformation portion of the chain corresponds to 203–253 (PQSLDSWWTSLNFLGGSPVCLGQNSQSPTSNHSPTSCPPICPGYRWMCLRR). The helical transmembrane segment at 254 to 274 (FIIFLFILLLCLIFLLVLLDY) threads the bilayer. Over 275–348 (QGMLPVCPLI…WASVRFSWLS (74 aa)) the chain is Virion surface. Asparagine 320 carries an N-linked (GlcNAc...) asparagine; by host glycan. A helical transmembrane segment spans residues 349-369 (LLVPFVQWFVGLSPTVWLSVI). Residues 370–375 (WMMWYW) lie on the Intravirion side of the membrane. Residues 376–398 (GPSLYNILSPFIPLLPIFFCLWV) form a helical membrane-spanning segment. Topologically, residues 399–400 (YI) are virion surface.

Belongs to the orthohepadnavirus major surface antigen family. In its internal form (Li-HBsAg), interacts with the capsid protein and with the isoform S. Interacts with host chaperone CANX. In terms of assembly, associates with host chaperone CANX through its pre-S2 N glycan; this association may be essential for isoform M proper secretion. As to quaternary structure, interacts with isoform L. Interacts with the antigens of satellite virus HDV (HDVAgs); this interaction is required for encapsidation of HDV genomic RNA. Isoform M is N-terminally acetylated by host at a ratio of 90%, and N-glycosylated by host at the pre-S2 region. In terms of processing, myristoylated.

It localises to the virion membrane. Its function is as follows. The large envelope protein exists in two topological conformations, one which is termed 'external' or Le-HBsAg and the other 'internal' or Li-HBsAg. In its external conformation the protein attaches the virus to cell receptors and thereby initiating infection. This interaction determines the species specificity and liver tropism. This attachment induces virion internalization predominantly through caveolin-mediated endocytosis. The large envelope protein also assures fusion between virion membrane and endosomal membrane. In its internal conformation the protein plays a role in virion morphogenesis and mediates the contact with the nucleocapsid like a matrix protein. In terms of biological role, the middle envelope protein plays an important role in the budding of the virion. It is involved in the induction of budding in a nucleocapsid independent way. In this process the majority of envelope proteins bud to form subviral lipoprotein particles of 22 nm of diameter that do not contain a nucleocapsid. In Hepatitis B virus genotype A1 subtype adw2 (isolate Southern-Africa/Cai) (HBV-A), this protein is Large envelope protein.